The chain runs to 153 residues: Ribosome maturation factor RimP (153 aa).

It belongs to the RimP family.

It is found in the cytoplasm. In terms of biological role, required for maturation of 30S ribosomal subunits. In Trichormus variabilis (strain ATCC 29413 / PCC 7937) (Anabaena variabilis), this protein is Ribosome maturation factor RimP.